The primary structure comprises 1166 residues: Topoisomerase 1-associated factor 1 (1166 aa).

4 disordered regions span residues 333-358 (KMDESKKWNRPQPRKTHEDSVLNNDF), 564-594 (QVRSRRRSRRKNMETQVAAPEDNNEEHASDD), 881-981 (DPYT…RARL), and 1023-1145 (ALLT…DENA). Residues 585 to 594 (DNNEEHASDD) show a composition bias toward acidic residues. Positions 881 to 893 (DPYTGDIEHDPRQ) are enriched in basic and acidic residues. Acidic residues predominate over residues 916–926 (FGSESEGEDVP). Positions 966-981 (LEARRKARQENTRARL) are enriched in basic and acidic residues. Acidic residues predominate over residues 1087 to 1107 (TEDDENTSATSDEDDEFDFDD). The span at 1109-1142 (LAFRRDRDLDRDPVLPSHAEDMQPTDTRELRDND) shows a compositional bias: basic and acidic residues.

The protein belongs to the timeless family.

It localises to the nucleus. Functionally, involved in chromosome segregation during meiosis and DNA damage repair. The polypeptide is Topoisomerase 1-associated factor 1 (tof1) (Aspergillus oryzae (strain ATCC 42149 / RIB 40) (Yellow koji mold)).